The primary structure comprises 278 residues: Large ribosomal subunit protein uL2 (278 aa).

The disordered stretch occupies residues Gly222 to Lys278.

The protein belongs to the universal ribosomal protein uL2 family. As to quaternary structure, part of the 50S ribosomal subunit. Forms a bridge to the 30S subunit in the 70S ribosome.

One of the primary rRNA binding proteins. Required for association of the 30S and 50S subunits to form the 70S ribosome, for tRNA binding and peptide bond formation. It has been suggested to have peptidyltransferase activity; this is somewhat controversial. Makes several contacts with the 16S rRNA in the 70S ribosome. The chain is Large ribosomal subunit protein uL2 from Rhodopseudomonas palustris (strain BisB5).